The primary structure comprises 248 residues: Probable transcriptional regulatory protein Rsph17025_0577 (248 aa).

A disordered region spans residues 1-21; it reads MAGHSKWANIQHRKGKQDKLR.

Belongs to the TACO1 family.

The protein localises to the cytoplasm. The sequence is that of Probable transcriptional regulatory protein Rsph17025_0577 from Cereibacter sphaeroides (strain ATCC 17025 / ATH 2.4.3) (Rhodobacter sphaeroides).